Consider the following 486-residue polypeptide: ATP synthase subunit beta (486 aa).

Gly164–Thr171 lines the ATP pocket.

It belongs to the ATPase alpha/beta chains family. In terms of assembly, F-type ATPases have 2 components, CF(1) - the catalytic core - and CF(0) - the membrane proton channel. CF(1) has five subunits: alpha(3), beta(3), gamma(1), delta(1), epsilon(1). CF(0) has four main subunits: a(1), b(1), b'(1) and c(9-12).

Its subcellular location is the cellular thylakoid membrane. The catalysed reaction is ATP + H2O + 4 H(+)(in) = ADP + phosphate + 5 H(+)(out). In terms of biological role, produces ATP from ADP in the presence of a proton gradient across the membrane. The catalytic sites are hosted primarily by the beta subunits. The polypeptide is ATP synthase subunit beta (Prochlorococcus marinus (strain MIT 9301)).